The chain runs to 101 residues: NAD(P)H-quinone oxidoreductase subunit 4L, chloroplastic (101 aa).

The next 3 helical transmembrane spans lie at 2-22 (MLEHVLVLSAYLFSVGLYGLI), 32-52 (MCLELILNAVNINFVTFSDFF), and 61-81 (IFSIFVIAIAAAEAAIGLAIV).

The protein belongs to the complex I subunit 4L family. NDH is composed of at least 16 different subunits, 5 of which are encoded in the nucleus.

Its subcellular location is the plastid. The protein resides in the chloroplast thylakoid membrane. It catalyses the reaction a plastoquinone + NADH + (n+1) H(+)(in) = a plastoquinol + NAD(+) + n H(+)(out). It carries out the reaction a plastoquinone + NADPH + (n+1) H(+)(in) = a plastoquinol + NADP(+) + n H(+)(out). In terms of biological role, NDH shuttles electrons from NAD(P)H:plastoquinone, via FMN and iron-sulfur (Fe-S) centers, to quinones in the photosynthetic chain and possibly in a chloroplast respiratory chain. The immediate electron acceptor for the enzyme in this species is believed to be plastoquinone. Couples the redox reaction to proton translocation, and thus conserves the redox energy in a proton gradient. This Daucus carota (Wild carrot) protein is NAD(P)H-quinone oxidoreductase subunit 4L, chloroplastic.